Consider the following 167-residue polypeptide: uncharacterized protein (167 aa).

The stretch at 28–59 (LTGIREELKADIDETRLIAESVLEEKEKKVVE) forms a coiled coil.

This is an uncharacterized protein from Aquifex aeolicus (strain VF5).